The sequence spans 241 residues: Eukaryotic translation initiation factor 3 subunit J (241 aa).

The interval methionine 1–lysine 97 is disordered. The span at glycine 28–leucine 45 shows a compositional bias: acidic residues. A coiled-coil region spans residues glutamate 31–threonine 119. 2 stretches are compositionally biased toward basic and acidic residues: residues glutamate 46–lysine 58 and isoleucine 69–lysine 87.

Belongs to the eIF-3 subunit J family. As to quaternary structure, component of the eukaryotic translation initiation factor 3 (eIF-3) complex.

The protein resides in the cytoplasm. Functionally, component of the eukaryotic translation initiation factor 3 (eIF-3) complex, which is involved in protein synthesis of a specialized repertoire of mRNAs and, together with other initiation factors, stimulates binding of mRNA and methionyl-tRNAi to the 40S ribosome. The eIF-3 complex specifically targets and initiates translation of a subset of mRNAs involved in cell proliferation. This is Eukaryotic translation initiation factor 3 subunit J from Aedes aegypti (Yellowfever mosquito).